The primary structure comprises 372 residues: Alpha-L-fucosidase 3 (372 aa).

The signal sequence occupies residues 1–23; the sequence is MNPILSSLFALSLLSSLSPSTHA. Ser-37 acts as the Nucleophile in catalysis. N-linked (GlcNAc...) asparagine glycans are attached at residues Asn-96, Asn-114, Asn-139, and Asn-182. Residues Asp-345 and His-348 contribute to the active site.

It belongs to the 'GDSL' lipolytic enzyme family. High expression in younger leaves and in the apical region of the inflorescence stem.

The protein resides in the secreted. It localises to the extracellular space. The protein localises to the apoplast. It catalyses the reaction an alpha-L-fucoside + H2O = L-fucose + an alcohol. Hydrolyzes alpha-1,2-linked fucose. Also active on fucosylated xyloglucan oligosaccharides. The protein is Alpha-L-fucosidase 3 (FXG1) of Arabidopsis thaliana (Mouse-ear cress).